A 438-amino-acid polypeptide reads, in one-letter code: Envelope glycoprotein M (438 aa).

Over 1–13 the chain is Intravirion; the sequence is MAGSAQPAAVHWR. A helical membrane pass occupies residues 14–34; it reads LWLAQVGVFAGLALLLLITLI. The Virion surface portion of the chain corresponds to 35 to 88; that stretch reads GAASPGAGLPCFYAAIVNYNARNLSADGGAWAQRELGARHPALFLETPTTAAFS. The chain crosses the membrane as a helical span at residues 89 to 109; it reads AYTAVVLLAVAAFDVAAAIII. The Intravirion segment spans residues 110-132; that stretch reads RRENSGGFAAAYHMNALATLATP. The chain crosses the membrane as a helical span at residues 133–153; it reads PGALLLGALAAWTLQAAVLLL. Residues 154-158 lie on the Virion surface side of the membrane; sequence SHKIM. A helical membrane pass occupies residues 159–179; the sequence is VLAAATYLAHLAPPAAFVGLF. At 180 to 212 the chain is on the intravirion side; the sequence is CTAGLPGAEYAQAVHALRERSPRAHRLLGPGRA. Residues 213–233 form a helical membrane-spanning segment; it reads VMINLAGGLLALIIGTAPLML. The Virion surface portion of the chain corresponds to 234–248; the sequence is GQLLGAGLGLSLAQT. The chain crosses the membrane as a helical span at residues 249–269; that stretch reads VVAGVTVFCLAAVLFLVLTEL. Topologically, residues 270–276 are intravirion; it reads VLSRYTQ. The chain crosses the membrane as a helical span at residues 277–297; sequence VLPGPAFGTLVAASCIAVASH. Topologically, residues 298-317 are virion surface; it reads DYFHQLRGVVRTQAPRAAAR. A helical transmembrane segment spans residues 318 to 338; sequence VKLALAGVALLAVAMLVLRLV. The Intravirion portion of the chain corresponds to 339 to 438; the sequence is RACLHHRRKG…PRSPPPAHVK (100 aa). Residues 395–438 are disordered; that stretch reads EEAVYEAHAPPRPPTIPLRRPEVPHSRASHPRPPPRSPPPAHVK. The span at 425–438 shows a compositional bias: pro residues; the sequence is PRPPPRSPPPAHVK.

The protein belongs to the herpesviridae glycoprotein M family. Interacts (via N-terminus) with gN (via N-terminus). The gM-gN heterodimer forms the gCII complex. Post-translationally, N-glycosylated. It is not O-glycosylated.

It is found in the virion membrane. The protein resides in the host Golgi apparatus. The protein localises to the host trans-Golgi network. Its subcellular location is the host endosome membrane. It localises to the host nucleus inner membrane. Its function is as follows. Envelope glycoprotein important for virion assembly and egress. Plays a role in the correct incorporation of gH-gL into virion membrane. Directs the glycoprotein N (gN) to the host trans-Golgi network. This chain is Envelope glycoprotein M, found in Bovine herpesvirus 1.1 (strain Cooper) (BoHV-1).